Consider the following 549-residue polypeptide: Glucose-6-phosphate isomerase (549 aa).

The active-site Proton donor is the E355. Residues H387 and K515 contribute to the active site.

Belongs to the GPI family.

The protein localises to the cytoplasm. It catalyses the reaction alpha-D-glucose 6-phosphate = beta-D-fructose 6-phosphate. It participates in carbohydrate biosynthesis; gluconeogenesis. The protein operates within carbohydrate degradation; glycolysis; D-glyceraldehyde 3-phosphate and glycerone phosphate from D-glucose: step 2/4. Its function is as follows. Catalyzes the reversible isomerization of glucose-6-phosphate to fructose-6-phosphate. The protein is Glucose-6-phosphate isomerase of Histophilus somni (strain 129Pt) (Haemophilus somnus).